Consider the following 155-residue polypeptide: Small ribosomal subunit protein uS7c (155 aa).

This sequence belongs to the universal ribosomal protein uS7 family. Part of the 30S ribosomal subunit.

It localises to the plastid. The protein resides in the chloroplast. Its function is as follows. One of the primary rRNA binding proteins, it binds directly to 16S rRNA where it nucleates assembly of the head domain of the 30S subunit. The chain is Small ribosomal subunit protein uS7c (rps7) from Spirogyra maxima (Green alga).